The chain runs to 271 residues: Small ribosomal subunit protein uS9m (271 aa).

A mitochondrion-targeting transit peptide spans 1-11 (MFRSLAKLRCF). A disordered region spans residues 251–271 (KVERKKTGQPKARKKYTWVKR). Residues 252-271 (VERKKTGQPKARKKYTWVKR) show a composition bias toward basic residues.

It belongs to the universal ribosomal protein uS9 family. In terms of assembly, component of the mitochondrial small ribosomal subunit (mt-SSU). Mature yeast 74S mitochondrial ribosomes consist of a small (37S) and a large (54S) subunit. The 37S small subunit contains a 15S ribosomal RNA (15S mt-rRNA) and at least 32 different proteins. The 54S large subunit contains a 21S rRNA (21S mt-rRNA) and at least 45 different proteins.

The protein resides in the mitochondrion. Its function is as follows. Component of the mitochondrial ribosome (mitoribosome), a dedicated translation machinery responsible for the synthesis of mitochondrial genome-encoded proteins, including at least some of the essential transmembrane subunits of the mitochondrial respiratory chain. The mitoribosomes are attached to the mitochondrial inner membrane and translation products are cotranslationally integrated into the membrane. In Schizosaccharomyces pombe (strain 972 / ATCC 24843) (Fission yeast), this protein is Small ribosomal subunit protein uS9m (mrps9).